An 876-amino-acid polypeptide reads, in one-letter code: DNA polymerase 1 (876 aa).

Belongs to the DNA polymerase type-B family.

It carries out the reaction DNA(n) + a 2'-deoxyribonucleoside 5'-triphosphate = DNA(n+1) + diphosphate. Functionally, this polymerase possesses two enzymatic activities: DNA synthesis (polymerase) and an exonucleolytic activity that degrades single-stranded DNA in the 3'- to 5'-direction. In Sulfolobus acidocaldarius (strain ATCC 33909 / DSM 639 / JCM 8929 / NBRC 15157 / NCIMB 11770), this protein is DNA polymerase 1 (dpo1).